Reading from the N-terminus, the 74-residue chain is UPF0291 protein EF_0064 (74 aa).

The tract at residues 53-74 (YDPTGEDVTPEKLKEEQQKYFD) is disordered. The segment covering 61-74 (TPEKLKEEQQKYFD) has biased composition (basic and acidic residues).

The protein belongs to the UPF0291 family.

The protein resides in the cytoplasm. The chain is UPF0291 protein EF_0064 from Enterococcus faecalis (strain ATCC 700802 / V583).